The chain runs to 435 residues: Tryptophan--tRNA ligase (435 aa).

ATP contacts are provided by residues 10–12 and 18–19; these read TTS and GN. A 'HIGH' region motif is present at residues 11-19; the sequence is TSGTPHLGN. Asp143 lines the L-tryptophan pocket. ATP-binding positions include 155-157, Leu195, and 202-206; these read GRD and KMSKS. Positions 202–206 match the 'KMSKS' region motif; sequence KMSKS.

This sequence belongs to the class-I aminoacyl-tRNA synthetase family. Homodimer.

It is found in the cytoplasm. The enzyme catalyses tRNA(Trp) + L-tryptophan + ATP = L-tryptophyl-tRNA(Trp) + AMP + diphosphate + H(+). In terms of biological role, catalyzes the attachment of tryptophan to tRNA(Trp). The protein is Tryptophan--tRNA ligase of Xylella fastidiosa (strain Temecula1 / ATCC 700964).